We begin with the raw amino-acid sequence, 894 residues long: DNA mismatch repair protein MutS (894 aa).

632-639 (GPNMGGKS) is a binding site for ATP.

Belongs to the DNA mismatch repair MutS family.

In terms of biological role, this protein is involved in the repair of mismatches in DNA. It is possible that it carries out the mismatch recognition step. This protein has a weak ATPase activity. The polypeptide is DNA mismatch repair protein MutS (Paraburkholderia phytofirmans (strain DSM 17436 / LMG 22146 / PsJN) (Burkholderia phytofirmans)).